Reading from the N-terminus, the 279-residue chain is Type III pantothenate kinase (279 aa).

ATP is bound at residue 6 to 13 (DIGNTLSK). Residues Tyr-92 and 99–102 (GVDR) each bind substrate. The active-site Proton acceptor is Asp-101. K(+) is bound at residue Asp-120. Ser-123 serves as a coordination point for ATP. Thr-177 lines the substrate pocket.

It belongs to the type III pantothenate kinase family. In terms of assembly, homodimer. NH4(+) serves as cofactor. K(+) is required as a cofactor.

Its subcellular location is the cytoplasm. The catalysed reaction is (R)-pantothenate + ATP = (R)-4'-phosphopantothenate + ADP + H(+). The protein operates within cofactor biosynthesis; coenzyme A biosynthesis; CoA from (R)-pantothenate: step 1/5. Its function is as follows. Catalyzes the phosphorylation of pantothenate (Pan), the first step in CoA biosynthesis. The chain is Type III pantothenate kinase from Chromohalobacter salexigens (strain ATCC BAA-138 / DSM 3043 / CIP 106854 / NCIMB 13768 / 1H11).